We begin with the raw amino-acid sequence, 759 residues long: uncharacterized protein (759 aa).

2 disordered regions span residues 269 to 328 (SQRV…GEEP) and 406 to 759 (LPLR…AQTA). A compositionally biased stretch (basic and acidic residues) spans 289-299 (AGGKEEAERGG). Residues 406–415 (LPLRPPSGSG) show a composition bias toward low complexity. Positions 417-430 (AARKPGYEKEEGRG) are enriched in basic and acidic residues. A compositionally biased stretch (low complexity) spans 431–444 (RATTASATAATSPR). 2 stretches are compositionally biased toward basic and acidic residues: residues 469 to 518 (PESE…RGEH) and 525 to 545 (DSGR…EKGT). Positions 585–599 (WVPPPHLLFPSPLPS) are enriched in pro residues. Over residues 659–680 (SLSSLSSSSSSSSSSSPSYSPS) the composition is skewed to low complexity. Pro residues predominate over residues 681–690 (PLSPPSPVSP). Composition is skewed to low complexity over residues 691-704 (SSPR…IRSP) and 728-746 (PPFS…PSAP).

This is an uncharacterized protein from Human herpesvirus 6B (strain Z29) (HHV-6 variant B).